The sequence spans 234 residues: 1-(5-phosphoribosyl)-5-[(5-phosphoribosylamino)methylideneamino] imidazole-4-carboxamide isomerase (234 aa).

The active-site Proton acceptor is the D9. D131 (proton donor) is an active-site residue.

The protein belongs to the HisA/HisF family.

It is found in the cytoplasm. The enzyme catalyses 1-(5-phospho-beta-D-ribosyl)-5-[(5-phospho-beta-D-ribosylamino)methylideneamino]imidazole-4-carboxamide = 5-[(5-phospho-1-deoxy-D-ribulos-1-ylimino)methylamino]-1-(5-phospho-beta-D-ribosyl)imidazole-4-carboxamide. Its pathway is amino-acid biosynthesis; L-histidine biosynthesis; L-histidine from 5-phospho-alpha-D-ribose 1-diphosphate: step 4/9. The polypeptide is 1-(5-phosphoribosyl)-5-[(5-phosphoribosylamino)methylideneamino] imidazole-4-carboxamide isomerase (Staphylococcus aureus (strain NCTC 8325 / PS 47)).